The sequence spans 268 residues: 3-deoxy-manno-octulosonate cytidylyltransferase (268 aa).

Belongs to the KdsB family.

It localises to the cytoplasm. The catalysed reaction is 3-deoxy-alpha-D-manno-oct-2-ulosonate + CTP = CMP-3-deoxy-beta-D-manno-octulosonate + diphosphate. Its pathway is nucleotide-sugar biosynthesis; CMP-3-deoxy-D-manno-octulosonate biosynthesis; CMP-3-deoxy-D-manno-octulosonate from 3-deoxy-D-manno-octulosonate and CTP: step 1/1. It participates in bacterial outer membrane biogenesis; lipopolysaccharide biosynthesis. Activates KDO (a required 8-carbon sugar) for incorporation into bacterial lipopolysaccharide in Gram-negative bacteria. The protein is 3-deoxy-manno-octulosonate cytidylyltransferase of Ralstonia pickettii (strain 12J).